Here is a 705-residue protein sequence, read N- to C-terminus: MADPASYRPAPGSIPETPGVYRFRDEHGRVLYVGKAKNLRARLANYFAELHTLHPRTQHMVSSASSVDWTVVSTEVEALQLEYTWIKQFDPRFNVRYRDDKSYPSLAVTLHEEFPRLQVMRGPKRKGVRYFGPYAHAWAIRETLDLLLRVFPARTCSGGVFKRAAQVGRPCLLGYIDRCSAPCVGRVDAATHREIVEDFCDFMSGQTGRYLRRLEREMQQAAQAQEYERAARLRDDIGALRRAVEKQAVVLPDGTDADVIAFAEDELEAAVAVFYVRGGRVRGQRGWVVDKLDEVTTADLVEQFLTQEYLDGTGAASTGTAGSTVPTTTAGSQGEGIPREILVPALPPDVEAVTELLGAARGSRVEVRVPRRGDKRTLLETVERNAKQAFALHRTKRASDLTARSRALAELQEALELPDAPLRIECFDVSNTQGTNVVASMVVFEDGLPRKSEYRRFAIRGIAGREGAGREGAGDDVASMYETIHRRFSRYLAERSRIADIADIAELGDIAGAPGAAQPIDPGTGRPRRFAYPPNLVVVDGGAPQVAAAARALDELGIDAGPGGVALCGLAKRLEEVWLPDTADPVILPRTSEALYLLQRVRDEAHRFAIAYHRQKRSTAMVASALDEVPGLGDTRRKALLRHFGSVAKIRAASAEQIAQVSGIGPRTAAAIVTALARSAPGRADAPAPVVDPRTGEILDTETVS.

The 80-residue stretch at 16 to 95 (ETPGVYRFRD…IKQFDPRFNV (80 aa)) folds into the GIY-YIG domain. One can recognise a UVR domain in the interval 208–243 (GRYLRRLEREMQQAAQAQEYERAARLRDDIGALRRA). Residues 315-332 (AASTGTAGSTVPTTTAGS) show a composition bias toward low complexity. Disordered stretches follow at residues 315–335 (AAST…SQGE) and 683–705 (RADA…ETVS).

The protein belongs to the UvrC family. As to quaternary structure, interacts with UvrB in an incision complex.

It is found in the cytoplasm. In terms of biological role, the UvrABC repair system catalyzes the recognition and processing of DNA lesions. UvrC both incises the 5' and 3' sides of the lesion. The N-terminal half is responsible for the 3' incision and the C-terminal half is responsible for the 5' incision. The sequence is that of UvrABC system protein C from Frankia casuarinae (strain DSM 45818 / CECT 9043 / HFP020203 / CcI3).